A 60-amino-acid chain; its full sequence is MSDKTVTVEQIGSPIRRPFDQEATLVGLGLNKRHRRSTLKDTPAVRGMIAKVAHLVRVVE.

The protein belongs to the universal ribosomal protein uL30 family. As to quaternary structure, part of the 50S ribosomal subunit.

This chain is Large ribosomal subunit protein uL30, found in Xanthobacter autotrophicus (strain ATCC BAA-1158 / Py2).